The following is a 303-amino-acid chain: NAD kinase (303 aa).

Catalysis depends on Asp-71, which acts as the Proton acceptor. NAD(+)-binding positions include 71 to 72 (DG), 145 to 146 (ND), Arg-156, Arg-173, Asp-175, 186 to 191 (TGYSLS), and Gln-245.

Belongs to the NAD kinase family. A divalent metal cation serves as cofactor.

It is found in the cytoplasm. It catalyses the reaction NAD(+) + ATP = ADP + NADP(+) + H(+). In terms of biological role, involved in the regulation of the intracellular balance of NAD and NADP, and is a key enzyme in the biosynthesis of NADP. Catalyzes specifically the phosphorylation on 2'-hydroxyl of the adenosine moiety of NAD to yield NADP. The protein is NAD kinase of Magnetococcus marinus (strain ATCC BAA-1437 / JCM 17883 / MC-1).